Consider the following 795-residue polypeptide: RINT1-like protein MAG2 (795 aa).

The stretch at 35–64 (TGLVSELQTEISELDQRLAGLNRQLESGLA) forms a coiled coil. The disordered stretch occupies residues 91 to 111 (TSVTRSASDSGKEEEATEHVA). Positions 100–111 (SGKEEEATEHVA) are enriched in basic and acidic residues. In terms of domain architecture, RINT1/TIP20 spans 207–795 (ALAMMRPQAI…KKVAKSRVFS (589 aa)).

This sequence belongs to the RINT1 family. Interacts with SEC20 and SYP81. Interacts with ZW10 (via the central region). Forms a complex with ZW10/MIP1, MIP2 and MIP3 on the endoplasmic reticulum. As to expression, highly expressed in dry seeds. Expressed at low levels in roots, rosette and cauline leaves, stems and flowers.

Its subcellular location is the endoplasmic reticulum membrane. Its function is as follows. Functions in the anterograde transport of storage protein precursors from the endoplasmic reticulum (ER) to the Golgi complex and in the retrograde transport from the Golgi complex to the ER. Forms a complex with ZW10/MIP1, MIP2 and MIP3 on the ER that may be responsible for efficient transport of seed storage proteins. Required for the responses to environmental stresses during seed germination and vegetative growth. Probably not involved in the retrograde transport from the ER to the apoplast. This is RINT1-like protein MAG2 from Arabidopsis thaliana (Mouse-ear cress).